Here is a 554-residue protein sequence, read N- to C-terminus: Hydroxylamine reductase (554 aa).

The [2Fe-2S] cluster site is built by cysteine 3, cysteine 6, cysteine 18, and cysteine 25. Residues histidine 252, glutamate 276, cysteine 320, cysteine 408, cysteine 436, cysteine 461, glutamate 495, and lysine 497 each contribute to the hybrid [4Fe-2O-2S] cluster site. Cysteine 408 carries the cysteine persulfide modification.

Belongs to the HCP family. The cofactor is [2Fe-2S] cluster. It depends on hybrid [4Fe-2O-2S] cluster as a cofactor.

The protein resides in the cytoplasm. The enzyme catalyses A + NH4(+) + H2O = hydroxylamine + AH2 + H(+). Catalyzes the reduction of hydroxylamine to form NH(3) and H(2)O. In Shewanella sp. (strain MR-4), this protein is Hydroxylamine reductase.